The primary structure comprises 315 residues: Ribosomal RNA small subunit methyltransferase H (315 aa).

S-adenosyl-L-methionine is bound by residues 37-39 (GGH), Asp-57, Leu-91, Asp-105, and Gln-112.

Belongs to the methyltransferase superfamily. RsmH family.

It is found in the cytoplasm. It catalyses the reaction cytidine(1402) in 16S rRNA + S-adenosyl-L-methionine = N(4)-methylcytidine(1402) in 16S rRNA + S-adenosyl-L-homocysteine + H(+). In terms of biological role, specifically methylates the N4 position of cytidine in position 1402 (C1402) of 16S rRNA. This is Ribosomal RNA small subunit methyltransferase H from Syntrophus aciditrophicus (strain SB).